A 508-amino-acid chain; its full sequence is Probable ligand-gated ion channel 46 (508 aa).

An N-terminal signal peptide occupies residues 1 to 18; the sequence is MQYLQFLSLVVLLLMCHA. Over 19 to 274 the chain is Extracellular; that stretch reads RKSVYRRNSP…FEFKRRAGWY (256 aa). Asn-65, Asn-134, Asn-175, and Asn-201 each carry an N-linked (GlcNAc...) asparagine glycan. An intrachain disulfide couples Cys-190 to Cys-204. A helical transmembrane segment spans residues 275 to 295; sequence ILQAYLPTYLTICISWISFAL. The Cytoplasmic portion of the chain corresponds to 296-301; sequence GSKAIP. A helical membrane pass occupies residues 302–321; sequence ARTMLGVNSLLAMTFQFGNI. The Extracellular portion of the chain corresponds to 322-335; that stretch reads IRNLPRVSYVKAID. Residues 336-356 traverse the membrane as a helical segment; that stretch reads VWMLSCMTFVFCSLLELAWVG. Over 357-480 the chain is Cytoplasmic; it reads YLSREEEPTS…KQRREILAHK (124 aa). Positions 374–407 are disordered; the sequence is AQVAPKPCHPPPVQQNANNSSVHRRQKQPKNEEE. Residues 481–501 form a helical membrane-spanning segment; sequence IDSVSVFMFPFLFVLFNIAYW. At 502-508 the chain is on the extracellular side; sequence QHYLRGY.

This sequence belongs to the ligand-gated ion channel (TC 1.A.9) family. Expressed in the nervous system, with high expression in cholinergic motor neurons and weak expression in GABAergic motor neurons.

It localises to the presynaptic cell membrane. The protein localises to the cell projection. Its subcellular location is the axon. It is found in the cytoplasmic vesicle. The protein resides in the secretory vesicle. It localises to the synaptic vesicle. Probable component of a ligand-gated anion channel. Negatively regulates synaptic transmission and synaptic vesicle release in response to acetylcholine in cholinergic motor neurons. Role in synaptic vesicle release kinetics may be in association with the ligand-gated ion channel protein acc-4. This Caenorhabditis elegans protein is Probable ligand-gated ion channel 46.